A 151-amino-acid chain; its full sequence is Centrin-A (151 aa).

2 consecutive EF-hand domains span residues 80-115 (DVYA…LGEA) and 116-151 (RSDS…KKIY). Ca(2+)-binding residues include Asp-93, Asp-95, Ser-97, Tyr-99, Asp-104, Asp-129, Asn-131, Asp-133, Lys-135, and Glu-140.

The protein belongs to the centrin family.

The protein localises to the cytoplasm. Its subcellular location is the cytoskeleton. It localises to the microtubule organizing center. The protein resides in the centrosome. It is found in the nucleus. Plays a fundamental role in microtubule-organizing center structure and function. In Dictyostelium discoideum (Social amoeba), this protein is Centrin-A (cenA).